A 163-amino-acid polypeptide reads, in one-letter code: Neurotrophin-3 (163 aa).

Positions 1–3 are cleaved as a signal peptide; the sequence is IQS. Residues 4–119 constitute a propeptide that is removed on maturation; it reads TSMDQGILTE…VLNRTSRRKR (116 aa). An N-linked (GlcNAc...) asparagine glycan is attached at Asn-112.

This sequence belongs to the NGF-beta family.

Its subcellular location is the secreted. In terms of biological role, seems to promote the survival of visceral and proprioceptive sensory neurons. This chain is Neurotrophin-3 (NTF3), found in Epicrates cenchria (Rainbow boa).